The sequence spans 534 residues: CTP synthase (534 aa).

Residues 1-267 form an amidoligase domain region; that stretch reads MTKYIFVTGG…DQIVCDHLKL (267 aa). S13 provides a ligand contact to CTP. Position 13 (S13) interacts with UTP. 14-19 contacts ATP; sequence SIGKGI. Y54 is a binding site for L-glutamine. D71 serves as a coordination point for ATP. Positions 71 and 141 each coordinate Mg(2+). Residues 148–150, 188–193, and K224 contribute to the CTP site; these read DIE and KTKPTQ. Residues 188–193 and K224 contribute to the UTP site; that span reads KTKPTQ. A Glutamine amidotransferase type-1 domain is found at 292-534; that stretch reads KIALVGKYVE…FVTAAVENAK (243 aa). G354 is an L-glutamine binding site. C381 functions as the Nucleophile; for glutamine hydrolysis in the catalytic mechanism. L-glutamine is bound by residues 382–385, E405, and R463; that span reads LGMQ. Active-site residues include H508 and E510.

The protein belongs to the CTP synthase family. In terms of assembly, homotetramer.

It catalyses the reaction UTP + L-glutamine + ATP + H2O = CTP + L-glutamate + ADP + phosphate + 2 H(+). It carries out the reaction L-glutamine + H2O = L-glutamate + NH4(+). The catalysed reaction is UTP + NH4(+) + ATP = CTP + ADP + phosphate + 2 H(+). Its pathway is pyrimidine metabolism; CTP biosynthesis via de novo pathway; CTP from UDP: step 2/2. Its activity is regulated as follows. Allosterically activated by GTP, when glutamine is the substrate; GTP has no effect on the reaction when ammonia is the substrate. The allosteric effector GTP functions by stabilizing the protein conformation that binds the tetrahedral intermediate(s) formed during glutamine hydrolysis. Inhibited by the product CTP, via allosteric rather than competitive inhibition. Catalyzes the ATP-dependent amination of UTP to CTP with either L-glutamine or ammonia as the source of nitrogen. Regulates intracellular CTP levels through interactions with the four ribonucleotide triphosphates. In Streptococcus thermophilus (strain CNRZ 1066), this protein is CTP synthase.